The primary structure comprises 433 residues: Phosphomethylpyrimidine synthase 1 (433 aa).

Substrate-binding positions include Asn66, Met94, Tyr123, His162, Ser184–Gly186, Asp225–Arg228, and Glu264. His268 serves as a coordination point for Zn(2+). Tyr291 is a substrate binding site. Position 332 (His332) interacts with Zn(2+). [4Fe-4S] cluster-binding residues include Cys408, Cys411, and Cys415.

This sequence belongs to the ThiC family. [4Fe-4S] cluster serves as cofactor.

It carries out the reaction 5-amino-1-(5-phospho-beta-D-ribosyl)imidazole + S-adenosyl-L-methionine = 4-amino-2-methyl-5-(phosphooxymethyl)pyrimidine + CO + 5'-deoxyadenosine + formate + L-methionine + 3 H(+). It participates in cofactor biosynthesis; thiamine diphosphate biosynthesis. Its function is as follows. Catalyzes the synthesis of the hydroxymethylpyrimidine phosphate (HMP-P) moiety of thiamine from aminoimidazole ribotide (AIR) in a radical S-adenosyl-L-methionine (SAM)-dependent reaction. The polypeptide is Phosphomethylpyrimidine synthase 1 (Saccharolobus solfataricus (strain ATCC 35092 / DSM 1617 / JCM 11322 / P2) (Sulfolobus solfataricus)).